A 120-amino-acid chain; its full sequence is UPF0344 protein LMOf2365_2298 (120 aa).

Helical transmembrane passes span G3–I23, M33–V53, I62–L82, and G92–L112.

It belongs to the UPF0344 family.

The protein resides in the cell membrane. In Listeria monocytogenes serotype 4b (strain F2365), this protein is UPF0344 protein LMOf2365_2298.